Reading from the N-terminus, the 430-residue chain is Serine--tRNA ligase (430 aa).

237-239 is an L-serine binding site; it reads TAE. Position 268–270 (268–270) interacts with ATP; the sequence is RRE. Glu-291 is a binding site for L-serine. 355–358 provides a ligand contact to ATP; sequence EISS. Ser-391 lines the L-serine pocket.

The protein belongs to the class-II aminoacyl-tRNA synthetase family. Type-1 seryl-tRNA synthetase subfamily. In terms of assembly, homodimer. The tRNA molecule binds across the dimer.

The protein localises to the cytoplasm. The catalysed reaction is tRNA(Ser) + L-serine + ATP = L-seryl-tRNA(Ser) + AMP + diphosphate + H(+). The enzyme catalyses tRNA(Sec) + L-serine + ATP = L-seryl-tRNA(Sec) + AMP + diphosphate + H(+). It functions in the pathway aminoacyl-tRNA biosynthesis; selenocysteinyl-tRNA(Sec) biosynthesis; L-seryl-tRNA(Sec) from L-serine and tRNA(Sec): step 1/1. Catalyzes the attachment of serine to tRNA(Ser). Is also able to aminoacylate tRNA(Sec) with serine, to form the misacylated tRNA L-seryl-tRNA(Sec), which will be further converted into selenocysteinyl-tRNA(Sec). This chain is Serine--tRNA ligase, found in Magnetococcus marinus (strain ATCC BAA-1437 / JCM 17883 / MC-1).